A 119-amino-acid chain; its full sequence is Movement protein TGB2 (119 aa).

The Cytoplasmic segment spans residues 1 to 13 (MVRNNEIGARPNK). A helical membrane pass occupies residues 14-34 (YWPVVAAVVAICLFGFLTVTN). The Lumenal segment spans residues 35–79 (QKHATQSGDNIHKFANGGQYRDGSKSIKYNCNNPRAYNGSSSNIT). Residues 80-100 (FSQLFLPVLLIGAALYAYLWF) traverse the membrane as a helical segment. Residues 101 to 119 (TRPDCSVTCRGDCCRSYGG) are Cytoplasmic-facing.

Belongs to the virgaviridae/benyvirus TGB2 movement protein family. As to quaternary structure, interacts with movement protein TGB3. TGB1-TGB3-TGB2 complex formation is enhanced by ATP hydrolysis.

The protein resides in the host cell junction. Its subcellular location is the host plasmodesma. It localises to the host endoplasmic reticulum membrane. The protein localises to the host cytoplasm. It is found in the host cytoskeleton. The protein resides in the host chloroplast envelope. Functionally, participates in the transport of viral genome to neighboring plant cells directly through plasmodesmata, without any budding. TGBp2 and TGBp3 are necessary for intracellular delivery of TGBp1-containing vRNPs to plasmodesmata. Can gate plasmodesmata and increase their size exclusion limit. To a lesser extent than TGB3, induces host actin cytoskeleton network thickening, which probably plays a major role in virus cell-to-cell movement. Binds ssRNA in a sequence non-specific manner. The protein is Movement protein TGB2 of Potato mop-top virus (isolate Potato/Sweden/Sw) (PMTV).